The sequence spans 469 residues: Cysteine protease ATG4 (469 aa).

Residues 48–99 are disordered; the sequence is KNIKADDHHPQTPPSVLKAETETQEAHDTAQPPNPPTNAPDTPPDSISSSFS. The segment covering 66–75 has biased composition (basic and acidic residues); the sequence is AETETQEAHD. Positions 79–90 are enriched in pro residues; sequence PPNPPTNAPDTP. Cys-172 (nucleophile) is an active-site residue. Catalysis depends on residues Asp-362 and His-364. The interval 443–469 is disordered; that stretch reads GSSEGRESAIDEVETLSDDDTDTIHEA. Positions 452–463 are enriched in acidic residues; sequence IDEVETLSDDDT.

Belongs to the peptidase C54 family. Interacts with ATG8.

The protein localises to the cytoplasm. It is found in the nucleus. The protein resides in the preautophagosomal structure. It catalyses the reaction [protein]-C-terminal L-amino acid-glycyl-phosphatidylethanolamide + H2O = [protein]-C-terminal L-amino acid-glycine + a 1,2-diacyl-sn-glycero-3-phosphoethanolamine. Its function is as follows. Cysteine protease that plays a key role in cytoplasm to vacuole transport (Cvt) and autophagy by mediating both proteolytic activation and delipidation of ATG8. Required for selective autophagic degradation of the nucleus (nucleophagy) as well as for mitophagy which contributes to regulate mitochondrial quantity and quality by eliminating the mitochondria to a basal level to fulfill cellular energy requirements and preventing excess ROS production. The protease activity is required for proteolytic activation of ATG8: cleaves the C-terminal amino acid of ATG8 to reveal a C-terminal glycine. ATG8 ubiquitin-like activity requires the exposure of the glycine at the C-terminus for its conjugation to phosphatidylethanolamine (PE) and its insertion to membranes, which is necessary for autophagy. The ATG8-PE conjugate mediates tethering between adjacent membranes and stimulates membrane hemifusion, leading to expansion of the autophagosomal membrane during autophagy. In addition to the protease activity, also catalyzes deconjugation of PE-conjugated forms of ATG8 during macroautophagy: ATG8 delipidation is required to release the protein from membranes, which facilitates multiple events during macroautophagy, and especially for efficient autophagosome biogenesis, the assembly of ATG9-containing tubulovesicular clusters into phagophores/autophagosomes, and for the disassembly of PAS-associated ATG components. ATG8 delipidation by ATG4 also recycles ATG8-PE generated on inappropriate membranes to maintain a reservoir of unlipidated ATG8 that is required for autophagosome formation at the PAS. Autophagy is required for proper vegetative growth, asexual/sexual reproduction, and full virulence. Autophagy is particularly involved in the biosynthesis of deoxynivalenol (DON), an important virulence determinant. The sequence is that of Cysteine protease ATG4 from Gibberella zeae (strain ATCC MYA-4620 / CBS 123657 / FGSC 9075 / NRRL 31084 / PH-1) (Wheat head blight fungus).